Consider the following 433-residue polypeptide: Serine--tRNA ligase (433 aa).

Residue 235–237 (TSE) participates in L-serine binding. 266–268 (RSE) is an ATP binding site. Position 289 (Glu289) interacts with L-serine. 353-356 (EISS) serves as a coordination point for ATP. Ser388 lines the L-serine pocket.

It belongs to the class-II aminoacyl-tRNA synthetase family. Type-1 seryl-tRNA synthetase subfamily. As to quaternary structure, homodimer. The tRNA molecule binds across the dimer.

It localises to the cytoplasm. It carries out the reaction tRNA(Ser) + L-serine + ATP = L-seryl-tRNA(Ser) + AMP + diphosphate + H(+). The catalysed reaction is tRNA(Sec) + L-serine + ATP = L-seryl-tRNA(Sec) + AMP + diphosphate + H(+). It functions in the pathway aminoacyl-tRNA biosynthesis; selenocysteinyl-tRNA(Sec) biosynthesis; L-seryl-tRNA(Sec) from L-serine and tRNA(Sec): step 1/1. Functionally, catalyzes the attachment of serine to tRNA(Ser). Is also able to aminoacylate tRNA(Sec) with serine, to form the misacylated tRNA L-seryl-tRNA(Sec), which will be further converted into selenocysteinyl-tRNA(Sec). This is Serine--tRNA ligase from Burkholderia pseudomallei (strain 1106a).